Consider the following 359-residue polypeptide: UDP-N-acetylglucosamine--N-acetylmuramyl-(pentapeptide) pyrophosphoryl-undecaprenol N-acetylglucosamine transferase (359 aa).

UDP-N-acetyl-alpha-D-glucosamine-binding positions include 12–14, asparagine 124, arginine 163, serine 191, isoleucine 245, 264–269, and glutamine 290; these read TGG and ALTVAE.

This sequence belongs to the glycosyltransferase 28 family. MurG subfamily.

Its subcellular location is the cell inner membrane. It carries out the reaction di-trans,octa-cis-undecaprenyl diphospho-N-acetyl-alpha-D-muramoyl-L-alanyl-D-glutamyl-meso-2,6-diaminopimeloyl-D-alanyl-D-alanine + UDP-N-acetyl-alpha-D-glucosamine = di-trans,octa-cis-undecaprenyl diphospho-[N-acetyl-alpha-D-glucosaminyl-(1-&gt;4)]-N-acetyl-alpha-D-muramoyl-L-alanyl-D-glutamyl-meso-2,6-diaminopimeloyl-D-alanyl-D-alanine + UDP + H(+). The protein operates within cell wall biogenesis; peptidoglycan biosynthesis. In terms of biological role, cell wall formation. Catalyzes the transfer of a GlcNAc subunit on undecaprenyl-pyrophosphoryl-MurNAc-pentapeptide (lipid intermediate I) to form undecaprenyl-pyrophosphoryl-MurNAc-(pentapeptide)GlcNAc (lipid intermediate II). The protein is UDP-N-acetylglucosamine--N-acetylmuramyl-(pentapeptide) pyrophosphoryl-undecaprenol N-acetylglucosamine transferase of Nitrosococcus oceani (strain ATCC 19707 / BCRC 17464 / JCM 30415 / NCIMB 11848 / C-107).